A 325-amino-acid polypeptide reads, in one-letter code: MDRVLVASYPINHLIRPHSFRIDYCWSTCFTSRLNSGKERQKLSSRWRWRSMASDSTDSSSSSSFAPSVESDPSDKTSASFCIIEGPETVQDFAKMELQEIQENIRSHRNKIFLHMEEVRRLRIQQRIKNAELGISKEERENELPNFPSFIPFLPPLSSENLKLYYVTCYSLIAGIILFGGLLAPTLELKLGLGGTSYEDFIRSVHLPMQLSQVDPIVASFSGGAVGVISALMVVEVNNVKQQEHKRCKYCLGTGYLACARCSNTGALVLIEPVSTLNGEHQPLSLPKTERCQNCSGSGKVMCPTCLCTGMAMASEHDPRIDPFD.

Residues 1 to 54 (MDRVLVASYPINHLIRPHSFRIDYCWSTCFTSRLNSGKERQKLSSRWRWRSMAS) constitute a chloroplast transit peptide. Over residues 53–71 (ASDSTDSSSSSSFAPSVES) the composition is skewed to low complexity. Positions 53 to 77 (ASDSTDSSSSSSFAPSVESDPSDKT) are disordered. The next 2 helical transmembrane spans lie at 164–184 (LYYV…GLLA) and 217–237 (IVAS…VVEV). Residues 226-317 (VGVISALMVV…CTGMAMASEH (92 aa)) are CR-type-like. The CXXCXGXG motif repeat unit spans residues 248–255 (CKYCLGTG). A CXXCXXXG motif repeat occupies 259-266 (CARCSNTG). The CXXCXGXG motif repeat unit spans residues 292 to 299 (CQNCSGSG). A CXXCXXXG motif repeat occupies 303-310 (CPTCLCTG).

Belongs to the orange-like family.

It localises to the plastid. The protein resides in the chloroplast membrane. Functionally, triggers accumulation of carotenoids, mainly beta-carotene, in fruit flesh. The protein is Protein ORANGE-ORANGE, chloroplastic of Cucumis melo (Muskmelon).